The following is a 219-amino-acid chain: Thiamine-phosphate synthase (219 aa).

Residues 44 to 48 and asparagine 79 contribute to the 4-amino-2-methyl-5-(diphosphooxymethyl)pyrimidine site; that span reads QFREK. 2 residues coordinate Mg(2+): aspartate 80 and aspartate 99. Serine 117 contributes to the 4-amino-2-methyl-5-(diphosphooxymethyl)pyrimidine binding site. 143–145 serves as a coordination point for 2-[(2R,5Z)-2-carboxy-4-methylthiazol-5(2H)-ylidene]ethyl phosphate; the sequence is TST. Lysine 146 serves as a coordination point for 4-amino-2-methyl-5-(diphosphooxymethyl)pyrimidine. Residues glycine 175 and 195–196 contribute to the 2-[(2R,5Z)-2-carboxy-4-methylthiazol-5(2H)-ylidene]ethyl phosphate site; that span reads IS.

This sequence belongs to the thiamine-phosphate synthase family. The cofactor is Mg(2+).

The catalysed reaction is 2-[(2R,5Z)-2-carboxy-4-methylthiazol-5(2H)-ylidene]ethyl phosphate + 4-amino-2-methyl-5-(diphosphooxymethyl)pyrimidine + 2 H(+) = thiamine phosphate + CO2 + diphosphate. It carries out the reaction 2-(2-carboxy-4-methylthiazol-5-yl)ethyl phosphate + 4-amino-2-methyl-5-(diphosphooxymethyl)pyrimidine + 2 H(+) = thiamine phosphate + CO2 + diphosphate. The enzyme catalyses 4-methyl-5-(2-phosphooxyethyl)-thiazole + 4-amino-2-methyl-5-(diphosphooxymethyl)pyrimidine + H(+) = thiamine phosphate + diphosphate. It participates in cofactor biosynthesis; thiamine diphosphate biosynthesis; thiamine phosphate from 4-amino-2-methyl-5-diphosphomethylpyrimidine and 4-methyl-5-(2-phosphoethyl)-thiazole: step 1/1. In terms of biological role, condenses 4-methyl-5-(beta-hydroxyethyl)thiazole monophosphate (THZ-P) and 2-methyl-4-amino-5-hydroxymethyl pyrimidine pyrophosphate (HMP-PP) to form thiamine monophosphate (TMP). This chain is Thiamine-phosphate synthase, found in Bacillus thuringiensis subsp. konkukian (strain 97-27).